We begin with the raw amino-acid sequence, 790 residues long: DNA ligase 1 (790 aa).

The N-terminal 64 residues, methionine 1–arginine 64, are a transit peptide targeting the mitochondrion. Positions arginine 64 to serine 142 are disordered. The Nuclear localization signal 1 signature appears at lysine 68–threonine 75. Polar residues predominate over residues aspartate 116–alanine 128. The interaction with target DNA stretch occupies residues lysine 337 to threonine 346. Glutamate 442 contacts ATP. The N6-AMP-lysine intermediate role is filled by lysine 444. ATP-binding residues include arginine 449 and arginine 465. Glutamate 497 provides a ligand contact to Mg(2+). Positions lysine 505–glutamine 512 match the Nuclear localization signal 2 motif. An interaction with target DNA region spans residues alanine 518 to lysine 520. Glutamate 596 contacts Mg(2+). ATP-binding residues include lysine 601, arginine 614, and lysine 620. The interval aspartate 757–aspartate 790 is disordered. The span at proline 781 to aspartate 790 shows a compositional bias: basic and acidic residues.

It belongs to the ATP-dependent DNA ligase family. Mg(2+) is required as a cofactor. As to expression, expressed in all vegetative and reproductive tissues.

It localises to the mitochondrion. It is found in the nucleus. The enzyme catalyses ATP + (deoxyribonucleotide)n-3'-hydroxyl + 5'-phospho-(deoxyribonucleotide)m = (deoxyribonucleotide)n+m + AMP + diphosphate.. Essential protein. DNA ligase that seals nicks in double-stranded DNA during DNA replication, DNA recombination and DNA repair. Involved in repair of both single strand breaks (SSBs) and double strand breaks (DSBs). Required in the endosperm for embryogenesis, probably to repair DNA-breaks generated by DME. The protein is DNA ligase 1 (LIG1) of Arabidopsis thaliana (Mouse-ear cress).